A 306-amino-acid chain; its full sequence is Agmatinase (306 aa).

Residues His-126, Asp-149, His-151, Asp-153, Asp-230, and Asp-232 each coordinate Mn(2+).

This sequence belongs to the arginase family. Agmatinase subfamily. Mn(2+) is required as a cofactor.

The catalysed reaction is agmatine + H2O = urea + putrescine. It functions in the pathway amine and polyamine biosynthesis; putrescine biosynthesis via agmatine pathway; putrescine from agmatine: step 1/1. Functionally, catalyzes the formation of putrescine from agmatine. This chain is Agmatinase, found in Shigella dysenteriae serotype 1 (strain Sd197).